We begin with the raw amino-acid sequence, 94 residues long: Aspartyl/glutamyl-tRNA(Asn/Gln) amidotransferase subunit C (94 aa).

It belongs to the GatC family. As to quaternary structure, heterotrimer of A, B and C subunits.

The catalysed reaction is L-glutamyl-tRNA(Gln) + L-glutamine + ATP + H2O = L-glutaminyl-tRNA(Gln) + L-glutamate + ADP + phosphate + H(+). It catalyses the reaction L-aspartyl-tRNA(Asn) + L-glutamine + ATP + H2O = L-asparaginyl-tRNA(Asn) + L-glutamate + ADP + phosphate + 2 H(+). Its function is as follows. Allows the formation of correctly charged Asn-tRNA(Asn) or Gln-tRNA(Gln) through the transamidation of misacylated Asp-tRNA(Asn) or Glu-tRNA(Gln) in organisms which lack either or both of asparaginyl-tRNA or glutaminyl-tRNA synthetases. The reaction takes place in the presence of glutamine and ATP through an activated phospho-Asp-tRNA(Asn) or phospho-Glu-tRNA(Gln). The polypeptide is Aspartyl/glutamyl-tRNA(Asn/Gln) amidotransferase subunit C (Caldicellulosiruptor bescii (strain ATCC BAA-1888 / DSM 6725 / KCTC 15123 / Z-1320) (Anaerocellum thermophilum)).